A 378-amino-acid polypeptide reads, in one-letter code: D-alanine--D-alanine ligase (378 aa).

Residues 157–368 (KVVFESAGLS…YGDLIDELIH (212 aa)) form the ATP-grasp domain. 189-244 (VDKLGFPVFVKPARAGSSMGISKVDSMEGLDAAIDEARRHDLKLVIEAGIVGREIE) lines the ATP pocket. 3 residues coordinate Mg(2+): Asp322, Glu335, and Asn337.

Belongs to the D-alanine--D-alanine ligase family. Mg(2+) serves as cofactor. The cofactor is Mn(2+).

It localises to the cytoplasm. The enzyme catalyses 2 D-alanine + ATP = D-alanyl-D-alanine + ADP + phosphate + H(+). The protein operates within cell wall biogenesis; peptidoglycan biosynthesis. Cell wall formation. In Paenarthrobacter aurescens (strain TC1), this protein is D-alanine--D-alanine ligase.